Here is a 206-residue protein sequence, read N- to C-terminus: MKQILDFIPLIIFFALYKMYDIYTATGALIVASAVQIILTYFIYKKVEKMQVITFLMVAVFGGMTIFLHDDNFIKWKVTIVYALFAIGLTVSHIMGKSAIKGMLGKEITLPDSIWGKINWAWTLFFTLCAILNVYVAFNLPLDVWVNFKVFGLLIATFAFTLLTGVYIYKHLPKDQHLPKDKHQQRDQETQNDTQQELSGKNTEEK.

The next 5 helical transmembrane spans lie at 22-42 (IYTATGALIVASAVQIILTYF), 50-70 (MQVITFLMVAVFGGMTIFLHD), 76-96 (WKVTIVYALFAIGLTVSHIMG), 118-138 (INWAWTLFFTLCAILNVYVAF), and 148-168 (FKVFGLLIATFAFTLLTGVYI). Residues 178–189 (LPKDKHQQRDQE) are compositionally biased toward basic and acidic residues. The tract at residues 178–206 (LPKDKHQQRDQETQNDTQQELSGKNTEEK) is disordered. Polar residues predominate over residues 191–206 (QNDTQQELSGKNTEEK).

It belongs to the YciB family.

It is found in the cell inner membrane. Plays a role in cell envelope biogenesis, maintenance of cell envelope integrity and membrane homeostasis. This is Inner membrane-spanning protein YciB from Vibrio atlanticus (strain LGP32) (Vibrio splendidus (strain Mel32)).